The primary structure comprises 205 residues: Cytochrome c oxidase subunit 3 (205 aa).

A run of 5 helical transmembrane segments spans residues 29-49, 72-92, 104-124, 142-162, and 184-204; these read TIVF…MYFV, ALLI…GVFA, WFLV…YEYI, FFIT…AFVV, and SYYW…IYFI.

Associates with subunits I, II and IV to form cytochrome c oxidase. The 4 subunit cytochrome c oxidase forms a supercomplex with the menaquinol-cytochrome c reductase complex (cytochrome bc1).

The protein resides in the cell membrane. The enzyme catalyses 4 Fe(II)-[cytochrome c] + O2 + 8 H(+)(in) = 4 Fe(III)-[cytochrome c] + 2 H2O + 4 H(+)(out). This chain is Cytochrome c oxidase subunit 3 (ctaE), found in Corynebacterium glutamicum (strain ATCC 13032 / DSM 20300 / JCM 1318 / BCRC 11384 / CCUG 27702 / LMG 3730 / NBRC 12168 / NCIMB 10025 / NRRL B-2784 / 534).